We begin with the raw amino-acid sequence, 361 residues long: Nicotinate-nucleotide--dimethylbenzimidazole phosphoribosyltransferase (361 aa).

The active-site Proton acceptor is the glutamate 315.

The protein belongs to the CobT family.

The enzyme catalyses 5,6-dimethylbenzimidazole + nicotinate beta-D-ribonucleotide = alpha-ribazole 5'-phosphate + nicotinate + H(+). It participates in nucleoside biosynthesis; alpha-ribazole biosynthesis; alpha-ribazole from 5,6-dimethylbenzimidazole: step 1/2. Catalyzes the synthesis of alpha-ribazole-5'-phosphate from nicotinate mononucleotide (NAMN) and 5,6-dimethylbenzimidazole (DMB). The sequence is that of Nicotinate-nucleotide--dimethylbenzimidazole phosphoribosyltransferase from Clostridium perfringens (strain 13 / Type A).